A 664-amino-acid chain; its full sequence is Gametogenetin-binding protein 2 (664 aa).

Disordered stretches follow at residues 375-425 and 447-476; these read QEKK…NTSE and KKGL…QEGS. The span at 376–388 shows a compositional bias: basic residues; that stretch reads EKKRQKKNRRKNK. Polar residues predominate over residues 452-475; it reads PHSNVSDCGYSSSLEGSEPGSQEG.

It is found in the cytoplasm. Functionally, may be involved in spermatogenesis. This is Gametogenetin-binding protein 2 (ggnbp2) from Xenopus laevis (African clawed frog).